Here is a 462-residue protein sequence, read N- to C-terminus: Elongation factor 1-alpha 1 (462 aa).

Residue Gly-2 is modified to N,N,N-trimethylglycine. The tr-type G domain occupies Lys-5 to Thr-242. The tract at residues Gly-14–Ser-21 is G1. Residue Gly-14–Ser-21 coordinates GTP. Lys-36 is subject to N6,N6,N6-trimethyllysine; alternate. At Lys-36 the chain carries N6,N6-dimethyllysine; alternate. Lys-36 bears the N6-methyllysine; alternate mark. N6,N6-dimethyllysine is present on Lys-55. Residues Gly-70 to Asp-74 form a G2 region. Lys-79 carries the post-translational modification N6,N6,N6-trimethyllysine; by EEF1AKMT1. The interval Asp-91–Gly-94 is G3. Asn-153–Asp-156 lines the GTP pocket. Positions Asn-153–Asp-156 are G4. Lys-165 bears the N6,N6,N6-trimethyllysine; alternate; by EEF1AKMT3 mark. Lys-165 is subject to N6,N6-dimethyllysine; alternate; by EEF1AKMT3. An N6-acetyllysine; alternate modification is found at Lys-165. N6-methyllysine; alternate; by EEF1AKMT3 is present on Lys-165. Lys-172 carries the post-translational modification N6-acetyllysine. Residue Ser-194 to Trp-196 coordinates GTP. Positions Ser-194–Trp-196 are G5. Lys-273 is modified (N6-acetyllysine). The residue at position 300 (Ser-300) is a Phosphoserine; by TGFBR1. 5-glutamyl glycerylphosphorylethanolamine is present on Glu-301. Position 318 is an N6,N6,N6-trimethyllysine; by EEF1AKMT2 (Lys-318). Glu-374 carries the 5-glutamyl glycerylphosphorylethanolamine modification. Lys-385 participates in a covalent cross-link: Glycyl lysine isopeptide (Lys-Gly) (interchain with G-Cter in ubiquitin). Lys-392 is subject to N6-acetyllysine; alternate. Lys-392 is modified (N6-succinyllysine; alternate). Thr-432 carries the post-translational modification Phosphothreonine; by PASK. An N6-acetyllysine modification is found at Lys-439.

This sequence belongs to the TRAFAC class translation factor GTPase superfamily. Classic translation factor GTPase family. EF-Tu/EF-1A subfamily. Found in a nuclear export complex with XPO5, EEF1A1, Ran and aminoacylated tRNA. Interacts with PARP1 and TXK. Interacts with KARS1. May interact with ERGIC2. Interacts with IFIT1 (via TPR repeats 4-7). Interacts with DLC1, facilitating distribution to the membrane periphery and ruffles upon growth factor stimulation. Interacts with ZPR1; the interaction occurs in a epidermal growth factor (EGF)-dependent manner. Interacts with PPP1R16B. Interacts with SPHK1 and SPHK2; both interactions increase SPHK1 and SPHK2 kinase activity. Interacts with guanyl-nucleotide exchange factor EEF1B2. Interacts (via middle-region) with HTATIP2 (via N-terminus); the interaction is direct and competes with EEF1A1 binding to guanyl-nucleotide exchange factor EEF1B2, thereby inhibiting GDP for GTP exchange and reactivation of EEF1A1. Interacts with tRNA. In terms of processing, ISGylated. Phosphorylated by TXK. Phosphorylation by PASK increases translation efficiency. Phosphorylated by ROCK2. Phosphorylation by TGFBR1 inhibits translation elongation. Post-translationally, trimethylated at Lys-79 by EEF1AKMT1. Methylated at Lys-165 by EEF1AKMT3, methylation by EEF1AKMT3 is dynamic as well as inducible by stress conditions, such as ER-stress, and plays a regulatory role on mRNA translation. Trimethylated at Lys-318 by EEF1AKMT2. Mono-, di-, and trimethylated at Lys-36 by EEF1AKMT4; trimethylated form is predominant. Methylation by EEF1AKMT4 contributes to the fine-tuning of translation rates for a subset of tRNAs. Trimethylated at Gly-2 by METTL13. Mono- and dimethylated at Lys-55 by METTL13; dimethylated form is predominant. In terms of processing, ubiquitinated at Lys-385 by RNF14 in response to ribosome collisions (ribosome stalling), leading to its degradation by the proteasome and rescue of stalled ribosomes.

Its subcellular location is the cytoplasm. It localises to the nucleus. It is found in the nucleolus. The protein resides in the cell membrane. It catalyses the reaction GTP + H2O = GDP + phosphate + H(+). Translation elongation factor that catalyzes the GTP-dependent binding of aminoacyl-tRNA (aa-tRNA) to the A-site of ribosomes during the elongation phase of protein synthesis. Base pairing between the mRNA codon and the aa-tRNA anticodon promotes GTP hydrolysis, releasing the aa-tRNA from EEF1A1 and allowing its accommodation into the ribosome. The growing protein chain is subsequently transferred from the P-site peptidyl tRNA to the A-site aa-tRNA, extending it by one amino acid through ribosome-catalyzed peptide bond formation. Also plays a role in the positive regulation of IFNG transcription in T-helper 1 cells as part of an IFNG promoter-binding complex with TXK and PARP1. Also plays a role in cytoskeleton organization by promoting actin bundling. This Cricetulus griseus (Chinese hamster) protein is Elongation factor 1-alpha 1 (EEF1A1).